We begin with the raw amino-acid sequence, 95 residues long: Signal recognition particle 19 kDa protein (95 aa).

Belongs to the SRP19 family. Part of the signal recognition particle protein translocation system, which is composed of SRP and FtsY. Archaeal SRP consists of a 7S RNA molecule of 300 nucleotides and two protein subunits: SRP54 and SRP19.

It localises to the cytoplasm. Functionally, involved in targeting and insertion of nascent membrane proteins into the cytoplasmic membrane. Binds directly to 7S RNA and mediates binding of the 54 kDa subunit of the SRP. The protein is Signal recognition particle 19 kDa protein of Desulfurococcus amylolyticus (strain DSM 18924 / JCM 16383 / VKM B-2413 / 1221n) (Desulfurococcus kamchatkensis).